Here is a 165-residue protein sequence, read N- to C-terminus: Anaphase-promoting complex subunit 11 (165 aa).

The segment at 52 to 95 (CPSCKFPGDQCPLVIGLCHHNFHDHCIYRWLDTPTSKGLCPMCR) adopts an RING-type; atypical zinc-finger fold.

In terms of assembly, the APC/C is composed of at least 13 subunits that stay tightly associated throughout the cell cycle: APC1, APC2, APC4, APC5, APC9, APC11, CDC16, CDC23, CDC26, CDC27, DOC1, MND2 and SWM1.

It participates in protein modification; protein ubiquitination. In terms of biological role, probably catalytic subunit of the anaphase promoting complex/cyclosome (APC/C), a cell cycle-regulated E3 ubiquitin-protein ligase complex that controls progression through mitosis and the G1 phase of the cell cycle. The APC/C is thought to confer substrate specificity and, in the presence of ubiquitin-conjugating E2 enzymes, it catalyzes the formation of protein-ubiquitin conjugates that are subsequently degraded by the 26S proteasome. In early mitosis, the APC/C is activated by CDC20 and targets securin PDS1, the B-type cyclin CLB5, and other anaphase inhibitory proteins for proteolysis, thereby triggering the separation of sister chromatids at the metaphase-to-anaphase transition. In late mitosis and in G1, degradation of CLB5 allows activation of the APC/C by CDH1, which is needed to destroy CDC20 and the B-type cyclin CLB2 to allow exit from mitosis and creating the low CDK state necessary for cytokinesis and for reforming prereplicative complexes in G1 prior to another round of replication. APC11 is required to recruit the ubiquitin-conjugating enzyme E2 to the APC/C. The sequence is that of Anaphase-promoting complex subunit 11 (APC11) from Saccharomyces cerevisiae (strain ATCC 204508 / S288c) (Baker's yeast).